A 227-amino-acid polypeptide reads, in one-letter code: Endo-1,4-beta-xylanase 11A (227 aa).

An N-terminal signal peptide occupies residues 1–36; sequence MVSASSLLLAASAIAGVFSAPAAAPVSENLNVLQER. Positions 37-227 constitute a GH11 domain; it reads ALTSSATGTS…SSGSASITVS (191 aa). The interval 112–136 is necrosis inducing domain; sequence VYGWTTSPLIEYYIVEDFGTYDPSS. Residue E122 is the Nucleophile of the active site. E214 acts as the Proton donor in catalysis.

The protein belongs to the glycosyl hydrolase 11 (cellulase G) family.

It localises to the secreted. The enzyme catalyses Endohydrolysis of (1-&gt;4)-beta-D-xylosidic linkages in xylans.. It functions in the pathway glycan degradation; xylan degradation. Significantly inhibited by the wheat xylanase inhibiting protein I (XIP-I) and the proteinaceous endoxylanase Triticum aestivum xylanase inhibitors I (TAXI-I), whereas no inhibition is detected with TAXI-II. Functionally, endo-1,4-beta-xylanase involved in the hydrolysis of xylan, a major structural heterogeneous polysaccharide found in plant biomass representing the second most abundant polysaccharide in the biosphere, after cellulose. Required for plant infection and the appearance of secondary lesions. Is able to induce necrosis on leaves, seedling growth inhibition, induction of a ROS burst, electrolyte leakage, cytoplasm shrinkage, autofluorescence, cell death, and induction of defense genes, and this abilities are independent of the catalytic activity. Only exhibits elicitor activity in certain plants such as tomato, but not in N.benthamiana. The chain is Endo-1,4-beta-xylanase 11A from Botryotinia fuckeliana (strain B05.10) (Noble rot fungus).